A 420-amino-acid chain; its full sequence is Torsin-4A (420 aa).

The chain crosses the membrane as a helical span at residues 130 to 150; that stretch reads CLLLFIAIVCFQIFNAIENLD. 202–209 contributes to the ATP binding site; it reads GPSGVGKS.

This sequence belongs to the ClpA/ClpB family. Torsin subfamily.

The protein resides in the membrane. This is Torsin-4A (tor4a) from Xenopus tropicalis (Western clawed frog).